The sequence spans 230 residues: Ureidoacrylate amidohydrolase RutB (230 aa).

Catalysis depends on D24, which acts as the Proton acceptor. K133 is an active-site residue. The active-site Nucleophile is the C166.

The protein belongs to the isochorismatase family. RutB subfamily.

It carries out the reaction (Z)-3-ureidoacrylate + H2O + H(+) = (Z)-3-aminoacrylate + NH4(+) + CO2. The enzyme catalyses (Z)-3-ureidoacrylate + H2O = (Z)-3-aminoacrylate + carbamate + H(+). The catalysed reaction is (Z)-2-methylureidoacrylate + H2O + H(+) = (Z)-2-methylaminoacrylate + NH4(+) + CO2. Functionally, hydrolyzes ureidoacrylate to form aminoacrylate and carbamate. The carbamate hydrolyzes spontaneously, thereby releasing one of the nitrogen atoms of the pyrimidine ring as ammonia and one of its carbon atoms as CO2. The polypeptide is Ureidoacrylate amidohydrolase RutB (Escherichia coli O150:H5 (strain SE15)).